The following is a 278-amino-acid chain: 4-deoxy-L-threo-5-hexosulose-uronate ketol-isomerase (278 aa).

Histidine 196, histidine 198, glutamate 203, and histidine 245 together coordinate Zn(2+).

This sequence belongs to the KduI family. Requires Zn(2+) as cofactor.

It carries out the reaction 5-dehydro-4-deoxy-D-glucuronate = 3-deoxy-D-glycero-2,5-hexodiulosonate. It functions in the pathway glycan metabolism; pectin degradation; 2-dehydro-3-deoxy-D-gluconate from pectin: step 4/5. Catalyzes the isomerization of 5-dehydro-4-deoxy-D-glucuronate to 3-deoxy-D-glycero-2,5-hexodiulosonate. The polypeptide is 4-deoxy-L-threo-5-hexosulose-uronate ketol-isomerase (Yersinia pestis bv. Antiqua (strain Antiqua)).